The chain runs to 280 residues: Late embryogenesis abundant protein 76 (280 aa).

2 disordered regions span residues 1 to 156 (MASN…GEAV) and 220 to 241 (EEED…TDPT). Over residues 28–39 (MRDKAEEGKDKT) the composition is skewed to basic and acidic residues. LEA 11-mer repeat repeat units lie at residues 31 to 41 (KAEEGKDKTSQ), 53 to 63 (TAQAAKDKTSQ), 75 to 85 (TAQAAKDKTSQ), 97 to 107 (TAQAAKDKTSQ), and 119 to 129 (TTQSSKEKTSQ). Residues 40–114 (SQTAQKAQQK…TSQAAQTTQQ (75 aa)) are compositionally biased toward low complexity. 2 stretches are compositionally biased toward basic and acidic residues: residues 115 to 127 (KAHE…KEKT) and 136 to 145 (EKARETKDKT). Residues 230-239 (TTTCTTQSTD) show a composition bias toward low complexity.

This sequence belongs to the LEA type 4 family.

Its function is as follows. Lea proteins are late embryonic proteins abundant in higher plant seed embryos. The polypeptide is Late embryogenesis abundant protein 76 (Brassica napus (Rape)).